Here is a 426-residue protein sequence, read N- to C-terminus: tRNA(Ile)-lysidine synthase (426 aa).

Ser-21–Ser-26 lines the ATP pocket.

It belongs to the tRNA(Ile)-lysidine synthase family.

It localises to the cytoplasm. The enzyme catalyses cytidine(34) in tRNA(Ile2) + L-lysine + ATP = lysidine(34) in tRNA(Ile2) + AMP + diphosphate + H(+). In terms of biological role, ligates lysine onto the cytidine present at position 34 of the AUA codon-specific tRNA(Ile) that contains the anticodon CAU, in an ATP-dependent manner. Cytidine is converted to lysidine, thus changing the amino acid specificity of the tRNA from methionine to isoleucine. This Enterobacter sp. (strain 638) protein is tRNA(Ile)-lysidine synthase.